Reading from the N-terminus, the 307-residue chain is Homoserine kinase (307 aa).

86 to 96 (PIARGLGSSAA) is an ATP binding site.

This sequence belongs to the GHMP kinase family. Homoserine kinase subfamily.

The protein localises to the cytoplasm. It catalyses the reaction L-homoserine + ATP = O-phospho-L-homoserine + ADP + H(+). The protein operates within amino-acid biosynthesis; L-threonine biosynthesis; L-threonine from L-aspartate: step 4/5. Functionally, catalyzes the ATP-dependent phosphorylation of L-homoserine to L-homoserine phosphate. In Petrotoga mobilis (strain DSM 10674 / SJ95), this protein is Homoserine kinase.